The following is a 292-amino-acid chain: Beta-lactamase-like protein 2 homolog (292 aa).

7 residues coordinate Zn(2+): histidine 76, histidine 78, aspartate 80, histidine 81, histidine 145, aspartate 163, and histidine 198.

Belongs to the metallo-beta-lactamase superfamily. Glyoxalase II family.

This Drosophila melanogaster (Fruit fly) protein is Beta-lactamase-like protein 2 homolog.